Here is a 357-residue protein sequence, read N- to C-terminus: Nitronate monooxygenase npaC (357 aa).

Positions 167, 172, and 206 each coordinate FMN.

This sequence belongs to the nitronate monooxygenase family. NMO class I subfamily. It depends on FMN as a cofactor.

Its function is as follows. Nitronate monooxygenase; part of the gene cluster that mediates the biosynthesis of the deadly neurotoxic nitroalkane 3-nitropropanoic acid (3-NPA) that acts as an antimetabolite of succinate and irreversibly inhibits succinate dehydrogenase and disrupts mitochondrial oxidative phosphorylation. Catalyzes the oxidation of 3-NPA to nitrite and malonic semialdehyde. NpaC is not conserved in all fungal npa clusters and, while it is possible that it serves as a self-protection mechanism against accumulation of 3-NPA (by npaA and npaB) in the producing host, the more likely scenario may be the three enzymes representing an alternative catabolic pathway of aspartate to generate readily metabolizable nitrogen and carbon sources. In Metarhizium robertsii (strain ARSEF 23 / ATCC MYA-3075) (Metarhizium anisopliae (strain ARSEF 23)), this protein is Nitronate monooxygenase npaC.